Reading from the N-terminus, the 957-residue chain is Glycine dehydrogenase (decarboxylating) (957 aa).

Lysine 708 carries the N6-(pyridoxal phosphate)lysine modification.

The protein belongs to the GcvP family. In terms of assembly, the glycine cleavage system is composed of four proteins: P, T, L and H. It depends on pyridoxal 5'-phosphate as a cofactor.

The catalysed reaction is N(6)-[(R)-lipoyl]-L-lysyl-[glycine-cleavage complex H protein] + glycine + H(+) = N(6)-[(R)-S(8)-aminomethyldihydrolipoyl]-L-lysyl-[glycine-cleavage complex H protein] + CO2. Its function is as follows. The glycine cleavage system catalyzes the degradation of glycine. The P protein binds the alpha-amino group of glycine through its pyridoxal phosphate cofactor; CO(2) is released and the remaining methylamine moiety is then transferred to the lipoamide cofactor of the H protein. In Enterobacter sp. (strain 638), this protein is Glycine dehydrogenase (decarboxylating).